The chain runs to 201 residues: Adenylyl-sulfate kinase (201 aa).

G35–S42 contributes to the ATP binding site. Catalysis depends on S109, which acts as the Phosphoserine intermediate.

Belongs to the APS kinase family.

The catalysed reaction is adenosine 5'-phosphosulfate + ATP = 3'-phosphoadenylyl sulfate + ADP + H(+). It participates in sulfur metabolism; hydrogen sulfide biosynthesis; sulfite from sulfate: step 2/3. In terms of biological role, catalyzes the synthesis of activated sulfate. The chain is Adenylyl-sulfate kinase from Shigella flexneri.